The following is a 471-amino-acid chain: ATP synthase subunit beta (471 aa).

Residue 152 to 159 (GGAGVGKT) coordinates ATP.

It belongs to the ATPase alpha/beta chains family. As to quaternary structure, F-type ATPases have 2 components, CF(1) - the catalytic core - and CF(0) - the membrane proton channel. CF(1) has five subunits: alpha(3), beta(3), gamma(1), delta(1), epsilon(1). CF(0) has three main subunits: a(1), b(2) and c(9-12). The alpha and beta chains form an alternating ring which encloses part of the gamma chain. CF(1) is attached to CF(0) by a central stalk formed by the gamma and epsilon chains, while a peripheral stalk is formed by the delta and b chains.

It is found in the cell membrane. It catalyses the reaction ATP + H2O + 4 H(+)(in) = ADP + phosphate + 5 H(+)(out). In terms of biological role, produces ATP from ADP in the presence of a proton gradient across the membrane. The catalytic sites are hosted primarily by the beta subunits. This chain is ATP synthase subunit beta, found in Herpetosiphon aurantiacus (Herpetosiphon giganteus).